The following is a 329-amino-acid chain: Legumin type B (329 aa).

Disordered stretches follow at residues 47 to 79 and 97 to 149; these read PETQEEQQERHQQKHSLPVGRRGGQHQQEEDGN and EEDT…GRNG. Residues 99-112 show a composition bias toward basic and acidic residues; sequence DTAKRLRSPRDKRN. A compositionally biased stretch (acidic residues) spans 129–138; it reads QQEEEEEEEE. The region spanning 161–308 is the Cupin type-1 domain; the sequence is ENIAQPARAD…AFGLRQRQVT (148 aa).

The protein belongs to the 11S seed storage protein (globulins) family. As to quaternary structure, hexamer; each subunit is composed of an acidic and a basic chain derived from a single precursor and linked by a disulfide bond.

In terms of biological role, this protein found in the seeds of many leguminous and non-leguminous plants is the source of sulfur-containing amino acids in seed meals. This Vicia faba (Broad bean) protein is Legumin type B (LEB6).